Reading from the N-terminus, the 156-residue chain is Ribosomal RNA large subunit methyltransferase H (156 aa).

S-adenosyl-L-methionine-binding positions include Leu73, Gly104, and 123-128 (LSALTL).

The protein belongs to the RNA methyltransferase RlmH family. As to quaternary structure, homodimer.

It is found in the cytoplasm. The enzyme catalyses pseudouridine(1915) in 23S rRNA + S-adenosyl-L-methionine = N(3)-methylpseudouridine(1915) in 23S rRNA + S-adenosyl-L-homocysteine + H(+). In terms of biological role, specifically methylates the pseudouridine at position 1915 (m3Psi1915) in 23S rRNA. This chain is Ribosomal RNA large subunit methyltransferase H, found in Colwellia psychrerythraea (strain 34H / ATCC BAA-681) (Vibrio psychroerythus).